A 334-amino-acid polypeptide reads, in one-letter code: Adenosine deaminase (334 aa).

Zn(2+) contacts are provided by His12 and His14. Substrate contacts are provided by His14, Asp16, and Gly170. A Zn(2+)-binding site is contributed by His197. The active-site Proton donor is the Glu200. Zn(2+) is bound at residue Asp278. A substrate-binding site is contributed by Asp279.

Belongs to the metallo-dependent hydrolases superfamily. Adenosine and AMP deaminases family. Adenosine deaminase subfamily. The cofactor is Zn(2+).

It catalyses the reaction adenosine + H2O + H(+) = inosine + NH4(+). The catalysed reaction is 2'-deoxyadenosine + H2O + H(+) = 2'-deoxyinosine + NH4(+). Its function is as follows. Catalyzes the hydrolytic deamination of adenosine and 2-deoxyadenosine. This is Adenosine deaminase from Yersinia pseudotuberculosis serotype O:1b (strain IP 31758).